We begin with the raw amino-acid sequence, 188 residues long: NADH-quinone oxidoreductase subunit B 1 (188 aa).

Residues Cys32, Cys33, Cys98, and Cys128 each coordinate [4Fe-4S] cluster. Residues 153 to 188 (VGGVSRPDALASPADALPPRAADSLTAPPVRPPDPS) form a disordered region. Residues 157–177 (SRPDALASPADALPPRAADSL) are compositionally biased toward low complexity.

The protein belongs to the complex I 20 kDa subunit family. In terms of assembly, NDH-1 is composed of 14 different subunits. Subunits NuoB, C, D, E, F, and G constitute the peripheral sector of the complex. Requires [4Fe-4S] cluster as cofactor.

Its subcellular location is the cell membrane. It carries out the reaction a quinone + NADH + 5 H(+)(in) = a quinol + NAD(+) + 4 H(+)(out). Functionally, NDH-1 shuttles electrons from NADH, via FMN and iron-sulfur (Fe-S) centers, to quinones in the respiratory chain. The immediate electron acceptor for the enzyme in this species is believed to be a menaquinone. Couples the redox reaction to proton translocation (for every two electrons transferred, four hydrogen ions are translocated across the cytoplasmic membrane), and thus conserves the redox energy in a proton gradient. This is NADH-quinone oxidoreductase subunit B 1 (nuoB1) from Salinispora tropica (strain ATCC BAA-916 / DSM 44818 / JCM 13857 / NBRC 105044 / CNB-440).